The following is a 421-amino-acid chain: MTARAVRGTKDLFGKELRMHQRIVATARKVLEAAGALELVTPIFEETQVFEKGVGAATDIVRKEMFTFQDRGGRSLTLRPEGTAAMVRAYLEHGMKVWPQPVRLWMAGPMFRAERPQKGRYRQFHQVNYEALGSENPILDAEAVVLLYECLKELGLRRLKVKLSSVGDPEDRARYNAYLREVLSPHREALSEDSKERLELNPMRILDSKSERDQALLKELGVRPMLDFLGEEARAHLKEVERHLERLSVPYELEPALVRGLDYYVRTAFEVHHEEIGAQSALGGGGRYDGLSELLGGPRVPGVGFAFGVERVALALEAEGFGLPEEKGPDLYLIPLTEEAVAEAFYLAEALRPRLRAEYALAPRKPAKGLEEALKRGAAFAGFLGEDELRAGEVTLKRLATGEQVRLSREEVPGYLLQALG.

Belongs to the class-II aminoacyl-tRNA synthetase family. As to quaternary structure, homodimer.

It localises to the cytoplasm. It catalyses the reaction tRNA(His) + L-histidine + ATP = L-histidyl-tRNA(His) + AMP + diphosphate + H(+). In Thermus thermophilus (strain ATCC BAA-163 / DSM 7039 / HB27), this protein is Histidine--tRNA ligase.